Here is a 438-residue protein sequence, read N- to C-terminus: V-type ATP synthase beta chain (438 aa).

This sequence belongs to the ATPase alpha/beta chains family.

Its function is as follows. Produces ATP from ADP in the presence of a proton gradient across the membrane. The V-type beta chain is a regulatory subunit. This is V-type ATP synthase beta chain from Chlamydia abortus (strain DSM 27085 / S26/3) (Chlamydophila abortus).